Consider the following 136-residue polypeptide: Small ribosomal subunit protein uS9 (136 aa).

The tract at residues 95 to 136 (GLSPDNRKPLKTEGHLSRDPRSKERKKYGLKKARKAGQFSKR) is disordered. The segment covering 99–116 (DNRKPLKTEGHLSRDPRS) has biased composition (basic and acidic residues). The span at 117–136 (KERKKYGLKKARKAGQFSKR) shows a compositional bias: basic residues.

The protein belongs to the universal ribosomal protein uS9 family.

The polypeptide is Small ribosomal subunit protein uS9 (Prochlorococcus marinus subsp. pastoris (strain CCMP1986 / NIES-2087 / MED4)).